Here is a 373-residue protein sequence, read N- to C-terminus: Probable tRNA sulfurtransferase (373 aa).

The 105-residue stretch at 54-158 (NKNIEELSKV…NDVAYFYYKI (105 aa)) folds into the THUMP domain. Residues 176–177 (LF), 201–202 (NF), K256, G278, and Q287 each bind ATP.

Belongs to the ThiI family.

The protein resides in the cytoplasm. The catalysed reaction is [ThiI sulfur-carrier protein]-S-sulfanyl-L-cysteine + a uridine in tRNA + 2 reduced [2Fe-2S]-[ferredoxin] + ATP + H(+) = [ThiI sulfur-carrier protein]-L-cysteine + a 4-thiouridine in tRNA + 2 oxidized [2Fe-2S]-[ferredoxin] + AMP + diphosphate. It catalyses the reaction [ThiS sulfur-carrier protein]-C-terminal Gly-Gly-AMP + S-sulfanyl-L-cysteinyl-[cysteine desulfurase] + AH2 = [ThiS sulfur-carrier protein]-C-terminal-Gly-aminoethanethioate + L-cysteinyl-[cysteine desulfurase] + A + AMP + 2 H(+). It functions in the pathway cofactor biosynthesis; thiamine diphosphate biosynthesis. Its function is as follows. Catalyzes the ATP-dependent transfer of a sulfur to tRNA to produce 4-thiouridine in position 8 of tRNAs, which functions as a near-UV photosensor. Also catalyzes the transfer of sulfur to the sulfur carrier protein ThiS, forming ThiS-thiocarboxylate. This is a step in the synthesis of thiazole, in the thiamine biosynthesis pathway. The sulfur is donated as persulfide by IscS. This is Probable tRNA sulfurtransferase from Saccharolobus islandicus (strain Y.N.15.51 / Yellowstone #2) (Sulfolobus islandicus).